The following is a 320-amino-acid chain: Beta-sarcoglycan (320 aa).

The span at 1-10 (MAAAAAAAAA) shows a compositional bias: low complexity. The segment at 1 to 34 (MAAAAAAAAATEQQGSNGPVKKSMREKAVERRNV) is disordered. Topologically, residues 1-67 (MAAAAAAAAA…GLRGRKGNLA (67 aa)) are cytoplasmic. Over residues 23-34 (SMREKAVERRNV) the composition is skewed to basic and acidic residues. The chain crosses the membrane as a helical; Signal-anchor for type II membrane protein span at residues 68-88 (ICVIVLLFILAVINLLITLVI). Over 89-320 (WAVIRIGPNG…VSDNPCGNTH (232 aa)) the chain is Extracellular. 3 N-linked (GlcNAc...) asparagine glycosylation sites follow: Asn-160, Asn-213, and Asn-260. Cystine bridges form between Cys-290–Cys-316 and Cys-292–Cys-309.

Belongs to the sarcoglycan beta/delta/gamma/zeta family. As to quaternary structure, cross-link to form 2 major subcomplexes: one consisting of SGCB, SGCD and SGCG and the other consisting of SGCB and SGCD. The association between SGCB and SGCG is particularly strong while SGCA is loosely associated with the other sarcoglycans. Post-translationally, disulfide bonds are present. Most strongly expressed in skeletal and heart muscle. Also detected in proliferating myoblasts.

It localises to the cell membrane. It is found in the sarcolemma. The protein resides in the cytoplasm. Its subcellular location is the cytoskeleton. Its function is as follows. Component of the sarcoglycan complex, a subcomplex of the dystrophin-glycoprotein complex which forms a link between the F-actin cytoskeleton and the extracellular matrix. The sequence is that of Beta-sarcoglycan (Sgcb) from Mus musculus (Mouse).